The chain runs to 383 residues: Dimethylsulfoniopropionate lyase 3 (383 aa).

This sequence belongs to the aspartate/glutamate racemases family. ALMA1 subfamily. Homotetramer.

It carries out the reaction S,S-dimethyl-beta-propiothetin = acrylate + dimethyl sulfide + H(+). Mediates cleavage of dimethylsulfoniopropionate (DMSP) into dimethyl sulfide (DMS) and acrylate. DMS is the principal form by which sulfur is transported from oceans to the atmosphere and is a key component of the ocean sulfur cycle. This Emiliania huxleyi (strain CCMP1516) protein is Dimethylsulfoniopropionate lyase 3.